A 421-amino-acid chain; its full sequence is Subtilisin-like protease 2 (421 aa).

The N-terminal stretch at 1–16 (MQLLNFGLLLLPFVAG) is a signal peptide. The propeptide occupies 17-122 (DLAPQPEPLL…VHPDQHVYLA (106 aa)). One can recognise an Inhibitor I9 domain in the interval 36–122 (QYIVTLKEGL…VHPDQHVYLA (87 aa)). One can recognise a Peptidase S8 domain in the interval 131–421 (RWGLGYMSSK…ERKFTLPKYF (291 aa)). Active-site charge relay system residues include Asp169 and His201. Asn248, Asn261, and Asn348 each carry an N-linked (GlcNAc...) asparagine glycan. Catalysis depends on Ser357, which acts as the Charge relay system. N-linked (GlcNAc...) asparagine glycosylation is present at Asn388.

It belongs to the peptidase S8 family.

The protein resides in the secreted. Functionally, secreted subtilisin-like serine protease with keratinolytic activity that contributes to pathogenicity. The protein is Subtilisin-like protease 2 (SUB2) of Trichophyton equinum (Horse ringworm fungus).